A 365-amino-acid polypeptide reads, in one-letter code: UDP-N-acetylglucosamine--N-acetylmuramyl-(pentapeptide) pyrophosphoryl-undecaprenol N-acetylglucosamine transferase (365 aa).

Residues 12-14 (TGG), Asn-128, Arg-169, Ser-195, and Gln-296 contribute to the UDP-N-acetyl-alpha-D-glucosamine site.

It belongs to the glycosyltransferase 28 family. MurG subfamily.

The protein resides in the cell inner membrane. It catalyses the reaction di-trans,octa-cis-undecaprenyl diphospho-N-acetyl-alpha-D-muramoyl-L-alanyl-D-glutamyl-meso-2,6-diaminopimeloyl-D-alanyl-D-alanine + UDP-N-acetyl-alpha-D-glucosamine = di-trans,octa-cis-undecaprenyl diphospho-[N-acetyl-alpha-D-glucosaminyl-(1-&gt;4)]-N-acetyl-alpha-D-muramoyl-L-alanyl-D-glutamyl-meso-2,6-diaminopimeloyl-D-alanyl-D-alanine + UDP + H(+). Its pathway is cell wall biogenesis; peptidoglycan biosynthesis. Cell wall formation. Catalyzes the transfer of a GlcNAc subunit on undecaprenyl-pyrophosphoryl-MurNAc-pentapeptide (lipid intermediate I) to form undecaprenyl-pyrophosphoryl-MurNAc-(pentapeptide)GlcNAc (lipid intermediate II). This Gluconobacter oxydans (strain 621H) (Gluconobacter suboxydans) protein is UDP-N-acetylglucosamine--N-acetylmuramyl-(pentapeptide) pyrophosphoryl-undecaprenol N-acetylglucosamine transferase.